The following is a 223-amino-acid chain: MQRAARPLVSVSDLDADKAAALKLIPIPSALEARLDAYVALLQQWQAKTNLVAPSTLPQLWTRHVADSLQLVSLMPHARRWLDFGSGGGFPGVVLACAMADVGGHVTLVERIAKKAAFLREALRVAGAPGTVVLADIGDNVDRFPQALDCITARAVAPLHQLIGFAEPLMTPGITKALFLKGQDVDAELTESTKYWKFQPKLHASLTGGQGWIVEIDHIERRT.

S-adenosyl-L-methionine-binding residues include G85, F90, and R154.

The protein belongs to the methyltransferase superfamily. RNA methyltransferase RsmG family.

The protein localises to the cytoplasm. The enzyme catalyses guanosine(527) in 16S rRNA + S-adenosyl-L-methionine = N(7)-methylguanosine(527) in 16S rRNA + S-adenosyl-L-homocysteine. Functionally, specifically methylates the N7 position of guanine in position 527 of 16S rRNA. The chain is Ribosomal RNA small subunit methyltransferase G from Rhodopseudomonas palustris (strain TIE-1).